The chain runs to 446 residues: Tubulin alpha-2 chain (446 aa).

An MREC motif motif is present at residues 1-4 (MREC). Positions 11, 68, 137, 141, 142, 176, 203, and 225 each coordinate GTP. Mg(2+) is bound at residue E68. E251 is an active-site residue.

Belongs to the tubulin family. Dimer of alpha and beta chains. A typical microtubule is a hollow water-filled tube with an outer diameter of 25 nm and an inner diameter of 15 nM. Alpha-beta heterodimers associate head-to-tail to form protofilaments running lengthwise along the microtubule wall with the beta-tubulin subunit facing the microtubule plus end conferring a structural polarity. Microtubules usually have 13 protofilaments but different protofilament numbers can be found in some organisms and specialized cells. Mg(2+) serves as cofactor. Some glutamate residues at the C-terminus are polyglycylated, resulting in polyglycine chains on the gamma-carboxyl group. Glycylation is mainly limited to tubulin incorporated into axonemes (cilia and flagella) whereas glutamylation is prevalent in neuronal cells, centrioles, axonemes, and the mitotic spindle. Both modifications can coexist on the same protein on adjacent residues, and lowering polyglycylation levels increases polyglutamylation, and reciprocally. The precise function of polyglycylation is still unclear. Post-translationally, some glutamate residues at the C-terminus are polyglutamylated, resulting in polyglutamate chains on the gamma-carboxyl group. Polyglutamylation plays a key role in microtubule severing by spastin (SPAST). SPAST preferentially recognizes and acts on microtubules decorated with short polyglutamate tails: severing activity by SPAST increases as the number of glutamates per tubulin rises from one to eight, but decreases beyond this glutamylation threshold. In terms of tissue distribution, testis specific.

Its subcellular location is the cytoplasm. It localises to the cytoskeleton. The enzyme catalyses GTP + H2O = GDP + phosphate + H(+). Its function is as follows. Tubulin is the major constituent of microtubules, a cylinder consisting of laterally associated linear protofilaments composed of alpha- and beta-tubulin heterodimers. Microtubules grow by the addition of GTP-tubulin dimers to the microtubule end, where a stabilizing cap forms. Below the cap, tubulin dimers are in GDP-bound state, owing to GTPase activity of alpha-tubulin. In Gallus gallus (Chicken), this protein is Tubulin alpha-2 chain.